Here is a 431-residue protein sequence, read N- to C-terminus: ATP-dependent protease ATPase subunit HslU (431 aa).

Residues Val-18, 60–65, Asp-244, Glu-309, and Arg-381 contribute to the ATP site; that span reads GVGKTE.

This sequence belongs to the ClpX chaperone family. HslU subfamily. A double ring-shaped homohexamer of HslV is capped on each side by a ring-shaped HslU homohexamer. The assembly of the HslU/HslV complex is dependent on binding of ATP.

Its subcellular location is the cytoplasm. Functionally, ATPase subunit of a proteasome-like degradation complex; this subunit has chaperone activity. The binding of ATP and its subsequent hydrolysis by HslU are essential for unfolding of protein substrates subsequently hydrolyzed by HslV. HslU recognizes the N-terminal part of its protein substrates and unfolds these before they are guided to HslV for hydrolysis. The sequence is that of ATP-dependent protease ATPase subunit HslU from Caulobacter sp. (strain K31).